The primary structure comprises 262 residues: Phosphonates import ATP-binding protein PhnC (262 aa).

The region spanning 5–253 (ICVEQLSKTF…RFDHLYRSIN (249 aa)) is the ABC transporter domain. Residue 37–44 (GPSGSGKS) participates in ATP binding.

The protein belongs to the ABC transporter superfamily. Phosphonates importer (TC 3.A.1.9.1) family. The complex is composed of two ATP-binding proteins (PhnC), two transmembrane proteins (PhnE) and a solute-binding protein (PhnD).

The protein resides in the cell inner membrane. The catalysed reaction is phosphonate(out) + ATP + H2O = phosphonate(in) + ADP + phosphate + H(+). Its function is as follows. Part of the ABC transporter complex PhnCDE involved in phosphonates import. Responsible for energy coupling to the transport system. This is Phosphonates import ATP-binding protein PhnC from Escherichia coli O157:H7.